The following is a 309-amino-acid chain: Methionyl-tRNA formyltransferase (309 aa).

A (6S)-5,6,7,8-tetrahydrofolate-binding site is contributed by 109–112 (SLLP).

Belongs to the Fmt family.

It carries out the reaction L-methionyl-tRNA(fMet) + (6R)-10-formyltetrahydrofolate = N-formyl-L-methionyl-tRNA(fMet) + (6S)-5,6,7,8-tetrahydrofolate + H(+). Attaches a formyl group to the free amino group of methionyl-tRNA(fMet). The formyl group appears to play a dual role in the initiator identity of N-formylmethionyl-tRNA by promoting its recognition by IF2 and preventing the misappropriation of this tRNA by the elongation apparatus. In Thiobacillus denitrificans (strain ATCC 25259 / T1), this protein is Methionyl-tRNA formyltransferase.